The chain runs to 336 residues: Ribosomal RNA small subunit methyltransferase C (336 aa).

It belongs to the methyltransferase superfamily. RsmC family. In terms of assembly, monomer.

The protein resides in the cytoplasm. The catalysed reaction is guanosine(1207) in 16S rRNA + S-adenosyl-L-methionine = N(2)-methylguanosine(1207) in 16S rRNA + S-adenosyl-L-homocysteine + H(+). Functionally, specifically methylates the guanine in position 1207 of 16S rRNA in the 30S particle. This chain is Ribosomal RNA small subunit methyltransferase C, found in Hamiltonella defensa subsp. Acyrthosiphon pisum (strain 5AT).